Here is a 237-residue protein sequence, read N- to C-terminus: DNA repair protein RecO (237 aa).

This sequence belongs to the RecO family.

Involved in DNA repair and RecF pathway recombination. The polypeptide is DNA repair protein RecO (Rickettsia rickettsii (strain Iowa)).